The chain runs to 433 residues: UDP-N-acetylmuramoylalanine--D-glutamate ligase (433 aa).

An ATP-binding site is contributed by 125 to 131 (GTSGKTT).

The protein belongs to the MurCDEF family.

It localises to the cytoplasm. The catalysed reaction is UDP-N-acetyl-alpha-D-muramoyl-L-alanine + D-glutamate + ATP = UDP-N-acetyl-alpha-D-muramoyl-L-alanyl-D-glutamate + ADP + phosphate + H(+). It functions in the pathway cell wall biogenesis; peptidoglycan biosynthesis. Cell wall formation. Catalyzes the addition of glutamate to the nucleotide precursor UDP-N-acetylmuramoyl-L-alanine (UMA). The polypeptide is UDP-N-acetylmuramoylalanine--D-glutamate ligase (Nitratidesulfovibrio vulgaris (strain ATCC 29579 / DSM 644 / CCUG 34227 / NCIMB 8303 / VKM B-1760 / Hildenborough) (Desulfovibrio vulgaris)).